Consider the following 447-residue polypeptide: MYIRTFGCQMNEYDSDKMADVLRADQGLELTDNPEDADVILFNTCSVREKAQEKVFSDLGRVQHLKKQNPNLVIGVGGCVASQEGEAIVKRAPYVDVVFGPQTLHRLPDLIKRRRAQGVSQVDISFPEIEKFDALPPPRVDGATAFVSIMEGCSKYCSFCVVPYTRGEEVSRPFDDVLLEVADLADQGVKEVTLLGQNVNAYRGAMGDSGEIADFAMLLEYVHEIPGIERIRYTTSHPKEMTQRMVDAYARLPKLVSFLHLPVQAGSDRVLAAMKRGYTALEFKSVVRRLRAARPSLTLSSDFIVGFPGETEEDFQKTMKLIEDVGFDTSFSFVYSRRPGTPAADLHDDTPQDVKLRRLQQLQALINQQAAAIAQGMIGTRQRVLVEGPSRRDPNELMGRTENNRIVNFPGVPRLIGHMVDVVVTHAHTNSLRGRVAGIERDTSGAE.

The MTTase N-terminal domain occupies 1–116; the sequence is MYIRTFGCQM…LPDLIKRRRA (116 aa). [4Fe-4S] cluster-binding residues include Cys-8, Cys-45, Cys-79, Cys-153, Cys-157, and Cys-160. The region spanning 139–372 is the Radical SAM core domain; it reads RVDGATAFVS…QALINQQAAA (234 aa). In terms of domain architecture, TRAM spans 375–438; that stretch reads QGMIGTRQRV…TNSLRGRVAG (64 aa).

Belongs to the methylthiotransferase family. MiaB subfamily. Monomer. It depends on [4Fe-4S] cluster as a cofactor.

The protein resides in the cytoplasm. The catalysed reaction is N(6)-dimethylallyladenosine(37) in tRNA + (sulfur carrier)-SH + AH2 + 2 S-adenosyl-L-methionine = 2-methylsulfanyl-N(6)-dimethylallyladenosine(37) in tRNA + (sulfur carrier)-H + 5'-deoxyadenosine + L-methionine + A + S-adenosyl-L-homocysteine + 2 H(+). Functionally, catalyzes the methylthiolation of N6-(dimethylallyl)adenosine (i(6)A), leading to the formation of 2-methylthio-N6-(dimethylallyl)adenosine (ms(2)i(6)A) at position 37 in tRNAs that read codons beginning with uridine. This Bordetella pertussis (strain Tohama I / ATCC BAA-589 / NCTC 13251) protein is tRNA-2-methylthio-N(6)-dimethylallyladenosine synthase.